Here is a 421-residue protein sequence, read N- to C-terminus: Cell division protein FtsA (421 aa).

The protein belongs to the FtsA/MreB family. In terms of assembly, self-interacts. Interacts with FtsZ.

It localises to the cell membrane. Its function is as follows. Cell division protein that is involved in the assembly of the Z ring. May serve as a membrane anchor for the Z ring. The chain is Cell division protein FtsA from Buchnera aphidicola subsp. Baizongia pistaciae (strain Bp).